Here is a 334-residue protein sequence, read N- to C-terminus: MTKIFADSSINPLSVAPMMDHTDRHFRYFLRQLTRHTLLYTEMITAQAILHGDRQRLLNFSPEEKPVALQLGGDDPQLLAECARIGQDWGYDEINLNVGCPSDRVQSGNFGACLMAQPDLVAQCVSAMQKAVEIPVTVKHRIGIDHRDSYEDLVHFVEIVANAGCQRFTVHARKAWLQGLSPKENRTIPPLRYEDVYQLKKDFPQLLIEINGGITQTEQIQQHLSHVDAVMVGRAAYENPYLFATVDRDIYHKTNLVPSRAEIIERMLPYVEERLRHGDRLNQITRHLLSLFNGQPRAKFWRRTLSDSTLLASAGPELLQTALQAQKFPGVLVA.

FMN-binding positions include 17–19 (PMM) and Q70. C100 serves as the catalytic Proton donor. FMN contacts are provided by residues K139, H171, 211–213 (NGG), and 233–234 (GR).

It belongs to the Dus family. DusA subfamily. It depends on FMN as a cofactor.

It carries out the reaction 5,6-dihydrouridine(20) in tRNA + NADP(+) = uridine(20) in tRNA + NADPH + H(+). The catalysed reaction is 5,6-dihydrouridine(20) in tRNA + NAD(+) = uridine(20) in tRNA + NADH + H(+). It catalyses the reaction 5,6-dihydrouridine(20a) in tRNA + NADP(+) = uridine(20a) in tRNA + NADPH + H(+). The enzyme catalyses 5,6-dihydrouridine(20a) in tRNA + NAD(+) = uridine(20a) in tRNA + NADH + H(+). Catalyzes the synthesis of 5,6-dihydrouridine (D), a modified base found in the D-loop of most tRNAs, via the reduction of the C5-C6 double bond in target uridines. Specifically modifies U20 and U20a in tRNAs. In Synechocystis sp. (strain ATCC 27184 / PCC 6803 / Kazusa), this protein is tRNA-dihydrouridine(20/20a) synthase (dus2).